We begin with the raw amino-acid sequence, 179 residues long: ATP-dependent protease subunit HslV (179 aa).

Thr5 is a catalytic residue. 2 residues coordinate Na(+): Cys164 and Thr167.

This sequence belongs to the peptidase T1B family. HslV subfamily. As to quaternary structure, a double ring-shaped homohexamer of HslV is capped on each side by a ring-shaped HslU homohexamer. The assembly of the HslU/HslV complex is dependent on binding of ATP.

The protein localises to the cytoplasm. It catalyses the reaction ATP-dependent cleavage of peptide bonds with broad specificity.. Its activity is regulated as follows. Allosterically activated by HslU binding. In terms of biological role, protease subunit of a proteasome-like degradation complex believed to be a general protein degrading machinery. The chain is ATP-dependent protease subunit HslV from Carboxydothermus hydrogenoformans (strain ATCC BAA-161 / DSM 6008 / Z-2901).